Consider the following 384-residue polypeptide: MAKHLFTSESVSEGHPDKIADQISDAVLDAILEQDPKARVACETYVKTGMVMVGGEVTTSAWVDIEEITRKTVREIGYTHSDMGFDADSCAILNAIGKQSPDINQGVDRADPKEQGAGDQGLMFGYANNETDVLMPAPITYSHKLVKRQSEVRKDKTLPWLRPDAKSQVTFAYNNDGSIAGIDAVVLSTQHREDVSQADLIEGVMETIIKPVLPAKWLSKDTKYFINPTGRFVIGGPVGDCGLTGRKIIVDTYGGMARHGGGAFSGKDPSKVDRSAAYAARYVAKNIVAAGLADRCEIQVSYAIGVAEPTSISIETFGTAKVAEELLIDLVRRHFDLRPYGLTEMLNLARPIYQATAAYGHFGRNEFPWEATDKAEALRADAGL.

His15 provides a ligand contact to ATP. Residue Asp17 coordinates Mg(2+). Glu43 provides a ligand contact to K(+). L-methionine contacts are provided by Glu56 and Gln99. The flexible loop stretch occupies residues Gln99 to Arg109. Residues Asp164–Lys166, Arg231–Phe232, Asp240, Arg246–Lys247, Ala263, and Lys267 contribute to the ATP site. Asp240 lines the L-methionine pocket. L-methionine is bound at residue Lys271.

The protein belongs to the AdoMet synthase family. In terms of assembly, homotetramer; dimer of dimers. It depends on Mg(2+) as a cofactor. K(+) is required as a cofactor.

The protein resides in the cytoplasm. The catalysed reaction is L-methionine + ATP + H2O = S-adenosyl-L-methionine + phosphate + diphosphate. It functions in the pathway amino-acid biosynthesis; S-adenosyl-L-methionine biosynthesis; S-adenosyl-L-methionine from L-methionine: step 1/1. Functionally, catalyzes the formation of S-adenosylmethionine (AdoMet) from methionine and ATP. The overall synthetic reaction is composed of two sequential steps, AdoMet formation and the subsequent tripolyphosphate hydrolysis which occurs prior to release of AdoMet from the enzyme. In Shewanella piezotolerans (strain WP3 / JCM 13877), this protein is S-adenosylmethionine synthase.